A 400-amino-acid chain; its full sequence is Formate-dependent phosphoribosylglycinamide formyltransferase (400 aa).

N(1)-(5-phospho-beta-D-ribosyl)glycinamide is bound by residues 22–23 (EL) and Glu-82. ATP-binding positions include Arg-114, Lys-155, 160–165 (SSGKGQ), 195–198 (EGFV), and Glu-203. In terms of domain architecture, ATP-grasp spans 119–308 (RLAAEELGLS…EFALHARALL (190 aa)). The Mg(2+) site is built by Glu-267 and Glu-279. N(1)-(5-phospho-beta-D-ribosyl)glycinamide contacts are provided by residues Asp-286, Lys-356, and 363–364 (RR).

The protein belongs to the PurK/PurT family. Homodimer.

The catalysed reaction is N(1)-(5-phospho-beta-D-ribosyl)glycinamide + formate + ATP = N(2)-formyl-N(1)-(5-phospho-beta-D-ribosyl)glycinamide + ADP + phosphate + H(+). It participates in purine metabolism; IMP biosynthesis via de novo pathway; N(2)-formyl-N(1)-(5-phospho-D-ribosyl)glycinamide from N(1)-(5-phospho-D-ribosyl)glycinamide (formate route): step 1/1. Its function is as follows. Involved in the de novo purine biosynthesis. Catalyzes the transfer of formate to 5-phospho-ribosyl-glycinamide (GAR), producing 5-phospho-ribosyl-N-formylglycinamide (FGAR). Formate is provided by PurU via hydrolysis of 10-formyl-tetrahydrofolate. The protein is Formate-dependent phosphoribosylglycinamide formyltransferase of Hahella chejuensis (strain KCTC 2396).